A 535-amino-acid polypeptide reads, in one-letter code: EH domain-containing protein 3 (535 aa).

M1 is modified (N-acetylmethionine). A Dynamin-type G domain is found at 55–286 (FDNKPMVLLV…DLFKDIQSLP (232 aa)). Residues 65–72 (GQYSTGKT) form a G1 motif region. 65–72 (GQYSTGKT) contributes to the ATP binding site. A G2 motif region spans residues 91–92 (EP). The segment at 153 to 156 (DTPG) is G3 motif. Residues 198 to 227 (DEFSEVIKALKNHEDKMRVVLNKADQIETQ) adopt a coiled-coil conformation. Residues 219-222 (NKAD) form a G4 motif region. Residue K220 coordinates ATP. Residue I243 is a region of interest, G5 motif. W258 is an ATP binding site. Residue K315 forms a Glycyl lysine isopeptide (Lys-Gly) (interchain with G-Cter in SUMO) linkage. Phosphoserine is present on residues S349 and S456. The 89-residue stretch at 444–532 (DKPMYDEIFY…AHLLPPSKRK (89 aa)) folds into the EH domain. Positions 476-511 (LPNSVLGKIWKLADIDKDGMLDDEEFALANHLIKVK) constitute an EF-hand domain. Ca(2+)-binding residues include D489, D491, D493, M495, and E500. A Glycyl lysine isopeptide (Lys-Gly) (interchain with G-Cter in SUMO) cross-link involves residue K511.

This sequence belongs to the TRAFAC class dynamin-like GTPase superfamily. Dynamin/Fzo/YdjA family. EHD subfamily. Homooligomer, and heterooligomer with EHD1, EHD2 and EHD4, ATP-binding is required for heterooligomerization. Interacts with PACSIN1. Interacts with PACSIN2. Interacts (via EH domain) with MICALL1. Interacts (via EH domain) with RAB11FIP2. Interacts with ANK2. Interacts with CACNA1GG and CACNA1H.

The protein localises to the recycling endosome membrane. The protein resides in the cell membrane. It is found in the cell projection. Its subcellular location is the cilium membrane. Functionally, ATP- and membrane-binding protein that controls membrane reorganization/tubulation upon ATP hydrolysis. In vitro causes tubulation of endocytic membranes. Binding to phosphatidic acid induces its membrane tubulation activity. Plays a role in endocytic transport. Involved in early endosome to recycling endosome compartment (ERC), retrograde early endosome to Golgi, and endosome to plasma membrane (rapid recycling) protein transport. Involved in the regulation of Golgi maintenance and morphology. Involved in the recycling of internalized D1 dopamine receptor. Plays a role in cardiac protein trafficking probably implicating ANK2. Involved in the ventricular membrane targeting of SLC8A1 and CACNA1C and probably the atrial membrane localization of CACNA1GG and CACNA1H implicated in the regulation of atrial myocyte excitability and cardiac conduction. In conjunction with EHD4 may be involved in endocytic trafficking of KDR/VEGFR2 implicated in control of glomerular function. Involved in the rapid recycling of integrin beta-3 implicated in cell adhesion maintenance. Involved in the unidirectional retrograde dendritic transport of endocytosed BACE1 and in efficient sorting of BACE1 to axons implicating a function in neuronal APP processing. Plays a role in the formation of the ciliary vesicle, an early step in cilium biogenesis; possibly sharing redundant functions with Ehd1. The sequence is that of EH domain-containing protein 3 from Rattus norvegicus (Rat).